Reading from the N-terminus, the 367-residue chain is N-acetylmuramoyl-L-alanine amidase BlyA (367 aa).

Residues 24 to 158 (VKKCVLHYTA…DITHKNCPAP (135 aa)) enclose the N-acetylmuramoyl-L-alanine amidase domain. The tract at residues 178–204 (SGKSVSKASPTKPTTSSPSSSSAVSGS) is disordered. The segment covering 180–204 (KSVSKASPTKPTTSSPSSSSAVSGS) has biased composition (low complexity). 2 SH3b domains span residues 202 to 271 (SGSL…YVDV) and 298 to 367 (GKIK…GSTI).

It belongs to the N-acetylmuramoyl-L-alanine amidase 2 family.

The protein resides in the secreted. The enzyme catalyses Hydrolyzes the link between N-acetylmuramoyl residues and L-amino acid residues in certain cell-wall glycopeptides.. Autolysins are involved in some important biological processes such as cell separation, cell-wall turnover, competence for genetic transformation, formation of the flagella and sporulation. Involved in prophage SP-beta-mediated cell lysis. This chain is N-acetylmuramoyl-L-alanine amidase BlyA (blyA), found in Bacillus subtilis (strain 168).